The following is a 448-amino-acid chain: 3-phosphoshikimate 1-carboxyvinyltransferase (448 aa).

3-phosphoshikimate contacts are provided by Lys-38, Ser-39, and Arg-43. Lys-38 is a binding site for phosphoenolpyruvate. Residues Gly-111 and Arg-140 each contribute to the phosphoenolpyruvate site. 3-phosphoshikimate-binding residues include Ser-185, Gln-187, Asp-335, and Lys-362. Gln-187 serves as a coordination point for phosphoenolpyruvate. Asp-335 functions as the Proton acceptor in the catalytic mechanism. 2 residues coordinate phosphoenolpyruvate: Arg-366 and Arg-408.

This sequence belongs to the EPSP synthase family. Monomer.

The protein resides in the cytoplasm. The catalysed reaction is 3-phosphoshikimate + phosphoenolpyruvate = 5-O-(1-carboxyvinyl)-3-phosphoshikimate + phosphate. Its pathway is metabolic intermediate biosynthesis; chorismate biosynthesis; chorismate from D-erythrose 4-phosphate and phosphoenolpyruvate: step 6/7. Catalyzes the transfer of the enolpyruvyl moiety of phosphoenolpyruvate (PEP) to the 5-hydroxyl of shikimate-3-phosphate (S3P) to produce enolpyruvyl shikimate-3-phosphate and inorganic phosphate. This chain is 3-phosphoshikimate 1-carboxyvinyltransferase, found in Synechococcus elongatus (strain ATCC 33912 / PCC 7942 / FACHB-805) (Anacystis nidulans R2).